Reading from the N-terminus, the 76-residue chain is Membrane protein UL43 homolog (76 aa).

Transmembrane regions (helical) follow at residues 7-27 (AVCV…SLAF) and 54-74 (ISRW…ATII).

The protein belongs to the alphaherpesvirinae HHV-1 UL43 family.

It localises to the membrane. The polypeptide is Membrane protein UL43 homolog (Equus caballus (Horse)).